Reading from the N-terminus, the 734-residue chain is Photosystem I P700 chlorophyll a apoprotein A2 (734 aa).

Transmembrane regions (helical) follow at residues 46–69 (IFAS…FHVA), 135–158 (LYTG…FHLQ), 175–199 (LNHH…HVAI), 273–291 (IAHH…GHMY), 330–353 (LHFQ…QHMY), 369–395 (AALY…IFFI), 417–439 (AIIS…LYVH), and 517–535 (FLVH…LILV). The [4Fe-4S] cluster site is built by C559 and C568. The next 2 helical transmembrane spans lie at 575–596 (AFYL…YWHW) and 643–665 (LSVW…MFLI). Chlorophyll a is bound by residues H654, M662, and Y670. W671 contacts phylloquinone. The helical transmembrane segment at 707–727 (LVGLAHFSVGYIFTYAAFLIA) threads the bilayer.

Belongs to the PsaA/PsaB family. The PsaA/B heterodimer binds the P700 chlorophyll special pair and subsequent electron acceptors. PSI consists of a core antenna complex that captures photons, and an electron transfer chain that converts photonic excitation into a charge separation. The eukaryotic PSI reaction center is composed of at least 11 subunits. The cofactor is P700 is a chlorophyll a/chlorophyll a' dimer, A0 is one or more chlorophyll a, A1 is one or both phylloquinones and FX is a shared 4Fe-4S iron-sulfur center..

The protein resides in the plastid. The protein localises to the chloroplast thylakoid membrane. The catalysed reaction is reduced [plastocyanin] + hnu + oxidized [2Fe-2S]-[ferredoxin] = oxidized [plastocyanin] + reduced [2Fe-2S]-[ferredoxin]. In terms of biological role, psaA and PsaB bind P700, the primary electron donor of photosystem I (PSI), as well as the electron acceptors A0, A1 and FX. PSI is a plastocyanin-ferredoxin oxidoreductase, converting photonic excitation into a charge separation, which transfers an electron from the donor P700 chlorophyll pair to the spectroscopically characterized acceptors A0, A1, FX, FA and FB in turn. Oxidized P700 is reduced on the lumenal side of the thylakoid membrane by plastocyanin. The chain is Photosystem I P700 chlorophyll a apoprotein A2 from Jasminum nudiflorum (Winter jasmine).